Consider the following 504-residue polypeptide: ATP synthase subunit beta (504 aa).

Positions 1 to 23 (MAKAATPKETAAAKKPAAPKKAA) are disordered. An ATP-binding site is contributed by 182–189 (GGAGVGKT).

The protein belongs to the ATPase alpha/beta chains family. In terms of assembly, F-type ATPases have 2 components, CF(1) - the catalytic core - and CF(0) - the membrane proton channel. CF(1) has five subunits: alpha(3), beta(3), gamma(1), delta(1), epsilon(1). CF(0) has three main subunits: a(1), b(2) and c(9-12). The alpha and beta chains form an alternating ring which encloses part of the gamma chain. CF(1) is attached to CF(0) by a central stalk formed by the gamma and epsilon chains, while a peripheral stalk is formed by the delta and b chains.

The protein resides in the cell inner membrane. It catalyses the reaction ATP + H2O + 4 H(+)(in) = ADP + phosphate + 5 H(+)(out). In terms of biological role, produces ATP from ADP in the presence of a proton gradient across the membrane. The catalytic sites are hosted primarily by the beta subunits. The chain is ATP synthase subunit beta from Rhizobium meliloti (strain 1021) (Ensifer meliloti).